Here is a 1066-residue protein sequence, read N- to C-terminus: Cytoplasmic dynein 2 intermediate chain 1 (1066 aa).

Disordered stretches follow at residues 22–366 and 381–408; these read LWAI…ENAR and YEDD…LEEL. S30 is subject to Phosphoserine. Composition is skewed to basic and acidic residues over residues 30-135, 147-171, 180-256, 264-308, and 316-336; these read SKEE…EELR, ETRD…RSEE, DEDR…EERH, GFHF…KRDG, and NLVR…HEEG. Phosphoserine is present on S247. 2 stretches are compositionally biased toward acidic residues: residues 351–362 and 381–397; these read ETVEIEKEETDL and YEDD…ESSN. The span at 399-408 shows a compositional bias: basic and acidic residues; the sequence is PESREKLEEL. Residues 473–552 are binding to the DYNLT2B-DYNLT1/DYNLT3 dimer; it reads ASHRQKSRTQ…DIQTEEIETR (80 aa). WD repeat units lie at residues 694–734, 775–821, 907–947, and 952–992; these read ICES…RLHY, VHKK…KADI, IRPV…PLLQ, and TDSH…LGPV.

It belongs to the dynein light intermediate chain family. Intermediate chain of the cytoplasmic dynein complex 2, a multisubunit complex, composed at least of eleven different proteins. The cytoplasmic dynein 2 complex consists of two catalytic heavy chains (HCs) and a number of non-catalytic subunits presented by intermediate chains (ICs), light intermediate chains (LICs) and light chains (LCs). Among them, a heavy chain (DYNC2H1), two intermediate chains (DYNC2I2 and DYNC2I1), a light intermediate chain (DYNC2LI1), and a light chain (DYNLT2B) are unique to the cytoplasmic dynein complex 2, but a subset of the light chains are also shared by dynein-1 and dynein-2 complexes. Interacts with DYNC2I2; their C-terminal domains each bind a copy of the heavy chain, and their extended N-terminal regions are held together by an array of light chain dimers. Interacts with DYNLT2B. Interacts (via the N-terminal half) with DYNLT2B-DYNLT1 dimer or with DYNLT2B-DYNLT3 dimer; this interaction is crucial for retrograde trafficking of ciliary proteins. As to expression, expressed in chondrocytes (at protein level).

The protein resides in the cell projection. Its subcellular location is the cilium. It localises to the cytoplasm. It is found in the cytoskeleton. The protein localises to the microtubule organizing center. The protein resides in the centrosome. Its function is as follows. Acts as one of several non-catalytic accessory components of the cytoplasmic dynein 2 complex (dynein-2 complex), a motor protein complex that drives the movement of cargos along microtubules within cilia and flagella in concert with the intraflagellar transport (IFT) system. DYNC2I1 plays a major role in retrograde ciliary protein trafficking in cilia and flagella. Also requires to maintain a functional transition zone. In Homo sapiens (Human), this protein is Cytoplasmic dynein 2 intermediate chain 1.